Reading from the N-terminus, the 526-residue chain is MERLPLSPAVLFLTITLPILYFWILHTSPARHHGKQLPLPPGPPRLPKIGNLHQVPRQIPWKKYKEWSDTYGPIMSVQLANTIAVVFSSWDLIKTHVERRNTIYSSRPSVPFFLHATGGLNASILPYGPEWKLQRAIRSSVLKPSMTIKYRDVQSMETTQLLHELLSTNDFSVCLRRCIASVFLTVAYGERCADHAGLEAIDRLEELNRAIALHAEALFSGAAGILAQLVLPQALVDRLPVRWKKDADILHNRLTADLVARTRAALARPGWNWVKAFAIKEGTGSGEGDGEQGREVGLKRLAYMVGSLYEASMAASQALRVIILAGILYPDATRRMHDELDAVVGKDRLPDFNDAAQLPYTQAFIKEAMRWRSLTPMGSPRATSDEDECRGYHIPRGATVLVNVWAINHDEGVFLDPFTFKPERWIENPDLPQLLYGMGQRACPGRHMGQDSLFLGTARLFWAFDMALPDGAEAIDQERFLDSGTTLAAFLPDFEVRFTPRSEKHREVIENSVVVSSDVSSVTVAT.

The helical transmembrane segment at 4–24 (LPLSPAVLFLTITLPILYFWI) threads the bilayer. C443 provides a ligand contact to heme.

The protein belongs to the cytochrome P450 family. The cofactor is heme.

The protein resides in the membrane. It catalyses the reaction tryprostatin A + reduced [NADPH--hemoprotein reductase] + O2 = fumitremorgin C + oxidized [NADPH--hemoprotein reductase] + 2 H2O + H(+). The protein operates within mycotoxin biosynthesis. Its function is as follows. Cytochrome P450 monooxygenase; part of the gene cluster that mediates the biosynthesis of fumitremorgins, indole alkaloids that carry not only intriguing chemical structures, but also interesting biological and pharmacological activities. The biosynthesis of fumitremorgin-type alkaloids begins by condensation of the two amino acids L-tryptophan and L-proline to brevianamide F, catalyzed by the non-ribosomal peptide synthetase ftmPS/ftmA. Brevianamide F is then prenylated by the prenyltransferase ftmPT1/ftmB in the presence of dimethylallyl diphosphate, resulting in the formation of tryprostatin B. The three cytochrome P450 monooxygenases, ftmP450-1/ftmC, ftmP450-2/ftmE and ftmP450-3/FtmG, are responsible for the conversion of tryprostatin B to 6-hydroxytryprostatin B, tryprostatin A to fumitremorgin C and fumitremorgin C to 12,13-dihydroxyfumitremorgin C, respectively. The putative methyltransferase ftmMT/ftmD is expected for the conversion of 6-hydroxytryprostatin B to tryprostatin A. FtmPT2/FtmH catalyzes the prenylation of 12,13-dihydroxyfumitre-morgin C in the presence of dimethylallyl diphosphate, resulting in the formation of fumitremorgin B. Fumitremorgin B is further converted to verruculogen by ftmOx1/ftmF via the insertion of an endoperoxide bond between the two prenyl moieties. Finally, verruculogen is further converted to fumitremorgin A by the verruculogen prenyltransferase ftmPT3. This is Fumitremorgin C synthase from Neosartorya fischeri (strain ATCC 1020 / DSM 3700 / CBS 544.65 / FGSC A1164 / JCM 1740 / NRRL 181 / WB 181) (Aspergillus fischerianus).